The sequence spans 410 residues: D-3-phosphoglycerate dehydrogenase (410 aa).

NAD(+) contacts are provided by residues 162-163, aspartate 182, 239-241, and aspartate 265; these read HI and AAR. The active site involves arginine 241. The active site involves glutamate 270. Histidine 293 acts as the Proton donor in catalysis. 293–296 contributes to the NAD(+) binding site; the sequence is HIGG. The ACT domain maps to 341–410; the sequence is RLLHIHENRP…DGTIRARVLY (70 aa).

Belongs to the D-isomer specific 2-hydroxyacid dehydrogenase family.

The catalysed reaction is (2R)-3-phosphoglycerate + NAD(+) = 3-phosphooxypyruvate + NADH + H(+). It carries out the reaction (R)-2-hydroxyglutarate + NAD(+) = 2-oxoglutarate + NADH + H(+). The protein operates within amino-acid biosynthesis; L-serine biosynthesis; L-serine from 3-phospho-D-glycerate: step 1/3. In bacteria displays feedback inhibition by L-serine. Its function is as follows. Catalyzes the reversible oxidation of 3-phospho-D-glycerate to 3-phosphonooxypyruvate, the first step of the phosphorylated L-serine biosynthesis pathway. Also catalyzes the reversible oxidation of 2-hydroxyglutarate to 2-oxoglutarate. This is D-3-phosphoglycerate dehydrogenase (serA) from Haemophilus influenzae (strain ATCC 51907 / DSM 11121 / KW20 / Rd).